The chain runs to 443 residues: Trigger factor (443 aa).

Positions 165-250 (GDQIVMDFLG…VKEVKKPVPA (86 aa)) constitute a PPIase FKBP-type domain.

Belongs to the FKBP-type PPIase family. Tig subfamily.

The protein resides in the cytoplasm. The catalysed reaction is [protein]-peptidylproline (omega=180) = [protein]-peptidylproline (omega=0). Functionally, involved in protein export. Acts as a chaperone by maintaining the newly synthesized protein in an open conformation. Functions as a peptidyl-prolyl cis-trans isomerase. This Roseobacter denitrificans (strain ATCC 33942 / OCh 114) (Erythrobacter sp. (strain OCh 114)) protein is Trigger factor.